The primary structure comprises 941 residues: Protein BREAST CANCER SUSCEPTIBILITY 1 homolog (941 aa).

The segment at 16 to 54 (CPICLSLYNSAVSLSCNHVFCNACIVKSMKMDATCPVCK) adopts an RING-type zinc-finger fold. 2 disordered regions span residues 87 to 282 (FVSQ…ILPS) and 303 to 528 (KVKV…GKDD). 2 stretches are compositionally biased toward basic and acidic residues: residues 96 to 115 (SDKEKQVRDASVEKASDKNR) and 125 to 136 (KRNEYGKTKEID). Residues 157 to 173 (LLQNLSAESLTKPTESV) are compositionally biased toward polar residues. The span at 175-196 (TAEKPKDYTENTVIRLDEHPSL) shows a compositional bias: basic and acidic residues. Polar residues predominate over residues 216–236 (NSSQRTESDQLLGTTPVNVPS). The span at 242-255 (DSDHESPSKEDEQQ) shows a compositional bias: basic and acidic residues. The Nuclear localization signal 1 signature appears at 298 to 305 (QKKLPKVK). Polar residues-rich tracts occupy residues 329 to 357 (GVSQEDNMESSAAATISEQQDSRGTSGTI) and 376 to 391 (SKAQSTRVQSDLNVSN). 2 stretches are compositionally biased toward basic and acidic residues: residues 428 to 453 (GKGDQDQAHGPSDTHPEKRSPTEKPS) and 477 to 487 (KTSEKKLKLDS). A Nuclear localization signal 2 motif is present at residues 444–451 (EKRSPTEK). The span at 489–498 (MISSKATQPH) shows a compositional bias: polar residues. Positions 512–528 (DKQDSRNNRKSTVGKDD) are enriched in basic and acidic residues. The segment at 561-612 (KFTCAFCQCSEDTEASGEMTHYYRGEPVSADFNGGSKVIHVHKNCAEWAPNV) adopts a C2HC pre-PHD-type zinc-finger fold. The PHD-type; degenerate zinc-finger motif lies at 632-681 (ISCSCCGLKGAALGCYNKSCKNSFHVTCAKLIPECRWDNVKFVMLCPLDA). BRCT domains are found at residues 724 to 819 (KQFH…PYEI) and 840 to 941 (KKPK…LVLI).

As to quaternary structure, forms heterodimer with BARD1/ROW1. As to expression, expressed ubiquitously with highest levels in flower buds. Mostly expressed in flowers and siliques, and, to a lower extent, in roots, rosette leaves, inflorescence and young cauline leaves.

Its subcellular location is the nucleus. Plays a role in DNA repair and in cell-cycle control. Required for the repair of DNA double-strand breaks (DSBs), both natural and induced by genotoxic stress, by homologous recombination (HR). This chain is Protein BREAST CANCER SUSCEPTIBILITY 1 homolog, found in Arabidopsis thaliana (Mouse-ear cress).